Here is a 312-residue protein sequence, read N- to C-terminus: ADP-L-glycero-D-manno-heptose-6-epimerase (312 aa).

Residues 10-11 (FI), 31-32 (DN), K38, K53, 75-79 (EGACS), and N92 contribute to the NADP(+) site. The active-site Proton acceptor is the Y140. K144 contacts NADP(+). Position 169 (N169) interacts with substrate. Positions 170 and 178 each coordinate NADP(+). K178 acts as the Proton acceptor in catalysis. Substrate is bound by residues S180, H187, 201 to 204 (FEGS), R209, and Y274.

It belongs to the NAD(P)-dependent epimerase/dehydratase family. HldD subfamily. Homopentamer. NADP(+) serves as cofactor.

It catalyses the reaction ADP-D-glycero-beta-D-manno-heptose = ADP-L-glycero-beta-D-manno-heptose. It functions in the pathway nucleotide-sugar biosynthesis; ADP-L-glycero-beta-D-manno-heptose biosynthesis; ADP-L-glycero-beta-D-manno-heptose from D-glycero-beta-D-manno-heptose 7-phosphate: step 4/4. Functionally, catalyzes the interconversion between ADP-D-glycero-beta-D-manno-heptose and ADP-L-glycero-beta-D-manno-heptose via an epimerization at carbon 6 of the heptose. The protein is ADP-L-glycero-D-manno-heptose-6-epimerase of Proteus mirabilis (strain HI4320).